The chain runs to 291 residues: Formamidopyrimidine-DNA glycosylase (291 aa).

Pro2 (schiff-base intermediate with DNA) is an active-site residue. Glu3 serves as the catalytic Proton donor. The active-site Proton donor; for beta-elimination activity is the Lys58. His100, Arg123, and Lys166 together coordinate DNA. The segment at 257 to 291 adopts an FPG-type zinc-finger fold; it reads SVYGREGKECFQCGIPITRISQSGRSSFYCSQCQK. Arg281 functions as the Proton donor; for delta-elimination activity in the catalytic mechanism.

Belongs to the FPG family. As to quaternary structure, monomer. Zn(2+) serves as cofactor.

The catalysed reaction is Hydrolysis of DNA containing ring-opened 7-methylguanine residues, releasing 2,6-diamino-4-hydroxy-5-(N-methyl)formamidopyrimidine.. It carries out the reaction 2'-deoxyribonucleotide-(2'-deoxyribose 5'-phosphate)-2'-deoxyribonucleotide-DNA = a 3'-end 2'-deoxyribonucleotide-(2,3-dehydro-2,3-deoxyribose 5'-phosphate)-DNA + a 5'-end 5'-phospho-2'-deoxyribonucleoside-DNA + H(+). Functionally, involved in base excision repair of DNA damaged by oxidation or by mutagenic agents. Acts as a DNA glycosylase that recognizes and removes damaged bases. Has a preference for oxidized purines, such as 7,8-dihydro-8-oxoguanine (8-oxoG). Has AP (apurinic/apyrimidinic) lyase activity and introduces nicks in the DNA strand. Cleaves the DNA backbone by beta-delta elimination to generate a single-strand break at the site of the removed base with both 3'- and 5'-phosphates. This is Formamidopyrimidine-DNA glycosylase from Bartonella quintana (strain Toulouse) (Rochalimaea quintana).